Consider the following 193-residue polypeptide: NADH-quinone oxidoreductase subunit B (193 aa).

Positions 1 to 11 (MGLTGTNTTLV) are enriched in polar residues. The tract at residues 1-23 (MGLTGTNTTLVAPQPKGILDPRT) is disordered. [4Fe-4S] cluster is bound by residues Cys-72, Cys-73, Cys-137, and Cys-167.

The protein belongs to the complex I 20 kDa subunit family. In terms of assembly, NDH-1 is composed of 14 different subunits. Subunits NuoB, C, D, E, F, and G constitute the peripheral sector of the complex. [4Fe-4S] cluster serves as cofactor.

It localises to the cell inner membrane. The enzyme catalyses a quinone + NADH + 5 H(+)(in) = a quinol + NAD(+) + 4 H(+)(out). NDH-1 shuttles electrons from NADH, via FMN and iron-sulfur (Fe-S) centers, to quinones in the respiratory chain. Couples the redox reaction to proton translocation (for every two electrons transferred, four hydrogen ions are translocated across the cytoplasmic membrane), and thus conserves the redox energy in a proton gradient. In Brucella canis (strain ATCC 23365 / NCTC 10854 / RM-666), this protein is NADH-quinone oxidoreductase subunit B.